The chain runs to 120 residues: MSLKIRLTRGGAKKRPYYRIVVADARAPRDGRFIDKVGAYDPMKAKDDPARIVLDNEKIQSWLAKGAQPTDRVLRFLDAAGLAKRPARNNPQKAEPGEKSKERAAKRAEKAAAPAEDAAA.

The tract at residues 81–120 is disordered; sequence GLAKRPARNNPQKAEPGEKSKERAAKRAEKAAAPAEDAAA. Basic and acidic residues predominate over residues 95 to 110; it reads EPGEKSKERAAKRAEK. Low complexity predominate over residues 111–120; that stretch reads AAAPAEDAAA.

This sequence belongs to the bacterial ribosomal protein bS16 family.

This is Small ribosomal subunit protein bS16 from Methylorubrum populi (strain ATCC BAA-705 / NCIMB 13946 / BJ001) (Methylobacterium populi).